Here is a 310-residue protein sequence, read N- to C-terminus: Terpene synthase 6 (310 aa).

The DDxx(x)D/E motif signature appears at 93–98; the sequence is DDFYFE. Residues 222-230 carry the NDxxSxxxD/E motif motif; that stretch reads NDCYSFNKE.

This sequence belongs to the terpene synthase family.

It carries out the reaction (2E,6E)-farnesyl diphosphate = (E)-beta-farnesene + diphosphate. The enzyme catalyses (2E,6E)-farnesyl diphosphate = (1S,2S,4R)-beta-elemene + diphosphate. The catalysed reaction is (2E,6E)-farnesyl diphosphate = (3E,6E)-alpha-farnesene + diphosphate. Functionally, terpene synthase that converts its substrate farnesyl diphosphate (FPP) into the sesquiterpenes beta-elemene, (E)-beta-farnesene and (E,E)-alpha-farnesene. This is Terpene synthase 6 from Dictyostelium purpureum (Slime mold).